We begin with the raw amino-acid sequence, 506 residues long: Cysteine--tRNA ligase (506 aa).

C34 contacts Zn(2+). The short motif at 36–46 (PTVYDFAHIGN) is the 'HIGH' region element. Zn(2+)-binding residues include C230, H269, and E273. Residues 302-306 (KMSKS) carry the 'KMSKS' region motif. Residue K305 participates in ATP binding.

The protein belongs to the class-I aminoacyl-tRNA synthetase family. In terms of assembly, monomer. Requires Zn(2+) as cofactor.

Its subcellular location is the cytoplasm. It carries out the reaction tRNA(Cys) + L-cysteine + ATP = L-cysteinyl-tRNA(Cys) + AMP + diphosphate. The protein is Cysteine--tRNA ligase of Brucella abortus (strain S19).